The following is a 273-amino-acid chain: Aegyptin (273 aa).

Residues 1–19 form the signal peptide; sequence MKPLVKLFLLFCLVGIVLS. Residues 20-160 form a disordered region; it reads RPMPEDEEPV…SEKNDPADTY (141 aa). The span at 24-62 shows a compositional bias: acidic residues; that stretch reads EDEEPVAEGGDDDASGESEGEEETTDDAGGDGGEEENEG. The segment covering 63-86 has biased composition (basic and acidic residues); the sequence is EEHAGDKDAGGEDTGKEENTGHDD. A compositionally biased stretch (acidic residues) spans 87–145; the sequence is AGEEDAGEEDAGEEDAGEEDAGEEDAEKEEGEKEDAGDDAGSDDGEEDSTGGDEGEDNA. Positions 137–273 are mediates binding of host collagen; it reads GGDEGEDNAE…IKSCVSSKGR (137 aa). Over residues 146–158 the composition is skewed to basic and acidic residues; it reads EDSKGSEKNDPAD. Disulfide bonds link cysteine 213/cysteine 267 and cysteine 235/cysteine 245.

Belongs to the aegyptin family. In terms of assembly, monomer; exhibits non-globular elongated shape in solution. As to expression, female saliva (at protein level). Adult female salivary gland (at protein level).

The protein resides in the secreted. Its function is as follows. Modulates blood feeding of female mosquitoes on vertebrate hosts. Inhibits collagen-induced platelet aggregation in the host via preventing collagen interaction with its three major ligands: glycoprotein VI, integrin alpha-2/beta-1 (ITGA2/ITGB1) and von Willebrand factor (VWF). Prevents collagen-mediated thrombus formation in the host. Binds to host collagens but not to laminin, vitronectin (VTN), fibronectin (FN1), von Willebrand factor (VWF) and fibrinogen. Influences cytokine production and populations of circulating leukocytes. Functionally, (Microbial infection) Reduces replication of dengue virus type 2 at inoculation site and viremia levels on day 2 post-inoculation. Promotes production of pro-inflammatory cytokines, such as GM-CSF (CSF2), IFN-gamma (IFNG), IL5 and IL6, in the lymph nodes of mice infected with dengue virus type 2. Increases the number of circulating eosinophils in mice infected with dengue virus type 2. Decreases the number of circulating monocytes in mice infected with dengue virus type 2. This chain is Aegyptin, found in Aedes aegypti (Yellowfever mosquito).